Consider the following 274-residue polypeptide: Thiamine kinase (274 aa).

Belongs to the thiamine kinase family.

The catalysed reaction is thiamine + ATP = thiamine phosphate + ADP + H(+). It participates in cofactor biosynthesis; thiamine diphosphate biosynthesis; thiamine phosphate from thiamine: step 1/1. Functionally, catalyzes the ATP-dependent phosphorylation of thiamine to thiamine phosphate. Is involved in thiamine salvage. This is Thiamine kinase from Salmonella typhi.